We begin with the raw amino-acid sequence, 157 residues long: 6,7-dimethyl-8-ribityllumazine synthase (157 aa).

Residues phenylalanine 26, 60–62, and 86–88 contribute to the 5-amino-6-(D-ribitylamino)uracil site; these read ALE and AVI. 91-92 is a binding site for (2S)-2-hydroxy-3-oxobutyl phosphate; that stretch reads ET. Histidine 94 (proton donor) is an active-site residue. Residue asparagine 119 coordinates 5-amino-6-(D-ribitylamino)uracil. Arginine 133 contributes to the (2S)-2-hydroxy-3-oxobutyl phosphate binding site.

The protein belongs to the DMRL synthase family.

The catalysed reaction is (2S)-2-hydroxy-3-oxobutyl phosphate + 5-amino-6-(D-ribitylamino)uracil = 6,7-dimethyl-8-(1-D-ribityl)lumazine + phosphate + 2 H2O + H(+). Its pathway is cofactor biosynthesis; riboflavin biosynthesis; riboflavin from 2-hydroxy-3-oxobutyl phosphate and 5-amino-6-(D-ribitylamino)uracil: step 1/2. Its function is as follows. Catalyzes the formation of 6,7-dimethyl-8-ribityllumazine by condensation of 5-amino-6-(D-ribitylamino)uracil with 3,4-dihydroxy-2-butanone 4-phosphate. This is the penultimate step in the biosynthesis of riboflavin. The sequence is that of 6,7-dimethyl-8-ribityllumazine synthase from Laribacter hongkongensis (strain HLHK9).